The chain runs to 542 residues: Calcium-dependent protein kinase 15 (542 aa).

Residues 1–73 (MGARASRHRQ…QAPQQAAAED (73 aa)) are disordered. Glycine 2 carries N-myristoyl glycine lipidation. Over residues 12–21 (PDQSQSQSPS) the composition is skewed to low complexity. Positions 22–40 (PHHKHHHHHQTTRAPKPKP) are enriched in basic residues. Residues 41–60 (KPQPPPPQQPRSQPPPPPRH) are compositionally biased toward pro residues. Residues 61-71 (QPQQAPQQAAA) show a composition bias toward low complexity. The region spanning 90–348 (YTFGRELGRG…AAEILNHPWI (259 aa)) is the Protein kinase domain. Residues 96-104 (LGRGQFGVT) and lysine 119 contribute to the ATP site. Aspartate 214 (proton acceptor) is an active-site residue. Residues 354 to 384 (APDKPLDITVISRMKQFRAMNKLKKVALKVV) form an autoinhibitory domain region. EF-hand domains lie at 391–426 (EEIVGLKEMFKSLDTDNSGTITLEELRAGLPKLGTK), 427–462 (ISESELRQLMEAADVDGNGSIDYVEFISATMHMNRL), 463–497 (EKEDHIYKAFEYFDKDHSGFITVDELEEALTKYDM), and 498–533 (GDEATIKEIIAEVDTDHDGRINYQEFVAMMKNNSPE). Residues aspartate 404, aspartate 406, serine 408, threonine 410, glutamate 415, aspartate 440, aspartate 442, asparagine 444, serine 446, glutamate 451, aspartate 476, aspartate 478, serine 480, glutamate 487, aspartate 511, aspartate 513, aspartate 515, arginine 517, and glutamate 522 each contribute to the Ca(2+) site.

Belongs to the protein kinase superfamily. Ser/Thr protein kinase family. CDPK subfamily.

The protein localises to the membrane. The catalysed reaction is L-seryl-[protein] + ATP = O-phospho-L-seryl-[protein] + ADP + H(+). The enzyme catalyses L-threonyl-[protein] + ATP = O-phospho-L-threonyl-[protein] + ADP + H(+). Activated by calcium. Autophosphorylation may play an important role in the regulation of the kinase activity. Its function is as follows. May play a role in signal transduction pathways that involve calcium as a second messenger. The sequence is that of Calcium-dependent protein kinase 15 from Oryza sativa subsp. japonica (Rice).